A 373-amino-acid polypeptide reads, in one-letter code: GTPase Obg (373 aa).

Positions 1–159 (MKFIDEARIE…RMVRLELKVL (159 aa)) constitute an Obg domain. Residues 128–147 (LHFKSSTNRAPRQKTDGKPG) form a disordered region. One can recognise an OBG-type G domain in the interval 160-334 (ADVGLLGMPN…LCYAVFDHIS (175 aa)). GTP contacts are provided by residues 166–173 (GMPNAGKS), 191–195 (FTTLA), 213–216 (DIPG), 284–287 (NKLD), and 315–317 (SAL). Positions 173 and 193 each coordinate Mg(2+). The interval 354–373 (FREKPQAPAAADDAGTDPQV) is disordered. Low complexity predominate over residues 359-373 (QAPAAADDAGTDPQV).

The protein belongs to the TRAFAC class OBG-HflX-like GTPase superfamily. OBG GTPase family. In terms of assembly, monomer. Requires Mg(2+) as cofactor.

It localises to the cytoplasm. An essential GTPase which binds GTP, GDP and possibly (p)ppGpp with moderate affinity, with high nucleotide exchange rates and a fairly low GTP hydrolysis rate. Plays a role in control of the cell cycle, stress response, ribosome biogenesis and in those bacteria that undergo differentiation, in morphogenesis control. The protein is GTPase Obg of Paraburkholderia phytofirmans (strain DSM 17436 / LMG 22146 / PsJN) (Burkholderia phytofirmans).